Here is a 103-residue protein sequence, read N- to C-terminus: Large ribosomal subunit protein eL14 (103 aa).

It belongs to the eukaryotic ribosomal protein eL14 family.

This is Large ribosomal subunit protein eL14 from Pyrobaculum arsenaticum (strain DSM 13514 / JCM 11321 / PZ6).